A 492-amino-acid chain; its full sequence is ATP synthase subunit beta, chloroplastic (492 aa).

170–177 is a binding site for ATP; that stretch reads GGAGVGKT.

Belongs to the ATPase alpha/beta chains family. As to quaternary structure, F-type ATPases have 2 components, CF(1) - the catalytic core - and CF(0) - the membrane proton channel. CF(1) has five subunits: alpha(3), beta(3), gamma(1), delta(1), epsilon(1). CF(0) has four main subunits: a(1), b(1), b'(1) and c(9-12).

The protein localises to the plastid. It is found in the chloroplast thylakoid membrane. The catalysed reaction is ATP + H2O + 4 H(+)(in) = ADP + phosphate + 5 H(+)(out). In terms of biological role, produces ATP from ADP in the presence of a proton gradient across the membrane. The catalytic sites are hosted primarily by the beta subunits. This chain is ATP synthase subunit beta, chloroplastic, found in Marchantia polymorpha (Common liverwort).